Reading from the N-terminus, the 440-residue chain is Putative F-box/LRR-repeat protein At5g15620 (440 aa).

Residues 1-52 (MDRFSNLPDDVIYHIVSFLSAKEATCLKFVSKNFQNLVTIKRNVVFHHWESF) form the F-box domain. 7 LRR repeats span residues 4 to 31 (FSNLPDDVIYHIVSFLSAKEATCLKFVS), 126 to 153 (LKLGCGFVIDILPKNALLPALKTLILDS), 156 to 181 (FYASDGCAFTRLLSASPVLEELVIDR), 194 to 205 (SSPTLKRLTLRR), 210 to 235 (PEPETWTDFESVSFDTPSLAYLKYKD), 264 to 289 (YWLNRSADPSNLIRGLKNVEILSIKV), and 318 to 343 (EADFCWDPLQILLEKSPNLKTLTIEG).

In Arabidopsis thaliana (Mouse-ear cress), this protein is Putative F-box/LRR-repeat protein At5g15620.